Consider the following 250-residue polypeptide: Homeobox protein Dlx4a (250 aa).

A DNA-binding region (homeobox) is located at residues 123–182; sequence IRKPRTIYSSLQLQALNQRFQQTQYLALPERADLAAKLGLTQTQVKIWFQNKRSKYKKIM. The segment at 182-202 is disordered; it reads MKHGSSGPEGEHLQAASASGA.

It belongs to the distal-less homeobox family.

The protein resides in the nucleus. The polypeptide is Homeobox protein Dlx4a (dlx4a) (Danio rerio (Zebrafish)).